The chain runs to 242 residues: Protein GrpE (242 aa).

Residues 1–10 (MAGENSSTET) are compositionally biased toward polar residues. The segment at 1 to 64 (MAGENSSTET…QSTESTSKEK (64 aa)) is disordered. The span at 11–20 (KNQEINEKTP) shows a compositional bias: basic and acidic residues. 2 stretches are compositionally biased toward polar residues: residues 21-32 (EVQTFETNVEFE) and 40-59 (DTEL…STES).

This sequence belongs to the GrpE family. Homodimer.

The protein localises to the cytoplasm. Participates actively in the response to hyperosmotic and heat shock by preventing the aggregation of stress-denatured proteins, in association with DnaK and GrpE. It is the nucleotide exchange factor for DnaK and may function as a thermosensor. Unfolded proteins bind initially to DnaJ; upon interaction with the DnaJ-bound protein, DnaK hydrolyzes its bound ATP, resulting in the formation of a stable complex. GrpE releases ADP from DnaK; ATP binding to DnaK triggers the release of the substrate protein, thus completing the reaction cycle. Several rounds of ATP-dependent interactions between DnaJ, DnaK and GrpE are required for fully efficient folding. The polypeptide is Protein GrpE (Trichodesmium erythraeum (strain IMS101)).